The primary structure comprises 33 residues: Suppressor protein HFN40 (33 aa).

In terms of biological role, suppresses expansion of husk leaf blades. This is Suppressor protein HFN40 from Zea mays (Maize).